A 102-amino-acid chain; its full sequence is Small ribosomal subunit protein uS10 (102 aa).

Belongs to the universal ribosomal protein uS10 family. In terms of assembly, part of the 30S ribosomal subunit.

Its function is as follows. Involved in the binding of tRNA to the ribosomes. The sequence is that of Small ribosomal subunit protein uS10 from Halalkalibacterium halodurans (strain ATCC BAA-125 / DSM 18197 / FERM 7344 / JCM 9153 / C-125) (Bacillus halodurans).